The following is a 92-amino-acid chain: Ictacalcin (92 aa).

EF-hand domains are found at residues 12 to 47 (ISTF…AFGN) and 49 to 84 (SDQA…TTML). Thr-27, Glu-32, Asp-62, Asn-64, Asp-66, and Glu-73 together coordinate Ca(2+).

Belongs to the S-100 family. In terms of tissue distribution, abundant in epithelial cells of olfactory rosette, barbel, skin and gill but not brain or muscle.

Plays an important role in catfish calcium homeostasis. The polypeptide is Ictacalcin (Ictalurus punctatus (Channel catfish)).